The following is a 299-amino-acid chain: Biotin transporter (299 aa).

A run of 10 helical transmembrane segments spans residues 2–22 (ALLIITTILWAFSFSFYGEYL), 26–46 (VDSYFAVLVRVGLAALVFLPF), 56–76 (TVGLYMLVGAMQLGVMYMLSF), 81–101 (YLTVSELLLFTVLTPLYITLI), 110–130 (LRWGYAFSALLAVIGAGIIRY), 137–157 (FWTGLLLVQLSNITFAIGMVG), 172–192 (AFAWFYLGAFLVAVIAWFLLG), 202–222 (LQWGILVFLGVVASGIGYFMW), 233–253 (TLGIMNNMHVPAGLLVNLAIW), and 256–276 (QPHWPTFITGALVILASLWVH). 2 EamA domains span residues 3–128 (LLII…AGII) and 139–274 (TGLL…ASLW).

This sequence belongs to the drug/metabolite transporter (DMT) superfamily. 10 TMS drug/metabolite exporter (DME) (TC 2.A.7.3) family.

Its subcellular location is the cell inner membrane. It catalyses the reaction biotin(in) = biotin(out). Its function is as follows. Uptake of biotin. The polypeptide is Biotin transporter (Escherichia coli O157:H7).